The chain runs to 336 residues: Aspartate carbamoyltransferase catalytic subunit (336 aa).

Residues Arg71 and Thr72 each coordinate carbamoyl phosphate. Lys99 is an L-aspartate binding site. Carbamoyl phosphate is bound by residues Arg121, His151, and Gln154. 2 residues coordinate L-aspartate: Arg184 and Arg239. Carbamoyl phosphate is bound by residues Gly280 and Pro281.

It belongs to the aspartate/ornithine carbamoyltransferase superfamily. ATCase family. As to quaternary structure, heterododecamer (2C3:3R2) of six catalytic PyrB chains organized as two trimers (C3), and six regulatory PyrI chains organized as three dimers (R2).

The enzyme catalyses carbamoyl phosphate + L-aspartate = N-carbamoyl-L-aspartate + phosphate + H(+). The protein operates within pyrimidine metabolism; UMP biosynthesis via de novo pathway; (S)-dihydroorotate from bicarbonate: step 2/3. In terms of biological role, catalyzes the condensation of carbamoyl phosphate and aspartate to form carbamoyl aspartate and inorganic phosphate, the committed step in the de novo pyrimidine nucleotide biosynthesis pathway. The chain is Aspartate carbamoyltransferase catalytic subunit from Azotobacter vinelandii (strain DJ / ATCC BAA-1303).